The chain runs to 156 residues: Endoribonuclease YbeY (156 aa).

The Zn(2+) site is built by His122, His126, and His132.

This sequence belongs to the endoribonuclease YbeY family. The cofactor is Zn(2+).

Its subcellular location is the cytoplasm. Functionally, single strand-specific metallo-endoribonuclease involved in late-stage 70S ribosome quality control and in maturation of the 3' terminus of the 16S rRNA. The protein is Endoribonuclease YbeY of Bacillus cereus (strain B4264).